The sequence spans 371 residues: Deoxyhypusine synthase (371 aa).

Residues 107 to 111 (SNLIS), 133 to 135 (TTG), Glu-139, and Asp-240 contribute to the NAD(+) site. 138–139 (EE) is a binding site for spermidine. Asp-245 lines the spermidine pocket. Gly-287 is a binding site for NAD(+). Residue His-292 participates in spermidine binding. 312–313 (TA) contributes to the NAD(+) binding site. Spermidine is bound by residues 318-320 (GSD) and 327-333 (EAVSWGK). The active-site Nucleophile is the Lys-333. Residue 346 to 347 (DA) participates in NAD(+) binding.

This sequence belongs to the deoxyhypusine synthase family. The cofactor is NAD(+). In terms of tissue distribution, expressed in shoot tips.

It catalyses the reaction [eIF5A protein]-L-lysine + spermidine = [eIF5A protein]-deoxyhypusine + propane-1,3-diamine. Its pathway is protein modification; eIF5A hypusination. Its function is as follows. Catalyzes the NAD-dependent oxidative cleavage of spermidine and the subsequent transfer of the butylamine moiety of spermidine to the epsilon-amino group of a specific lysine residue of the eIF-5A precursor protein to form the intermediate deoxyhypusine residue. Also able to produce homospermidine from putrescine. This is Deoxyhypusine synthase (DHS1) from Senecio vernalis (Spring groundsel).